Reading from the N-terminus, the 269-residue chain is MSGKDEYYNKSKQQGYRARSAYKLKQIDEEANLFERGDTVVDLGAAPGGWLQVAAEEVGESGTVVGVDLQRIDDLDDHDVETIRGDMTEERTRHYLREAIGERGADVVISDMAPNMTGEYALDHARSVHLARQAFDVAEELLAPGGDFVVKVFQGEDLDAFREDVRAEFEYLRTVSPPASRDSSSEVYLVAKGLNTAPVAAGDRIEVTVEERGDEGDGIAYVEGYSIFVSDADVGETVTVEVVDAKPRFGFATRVDVGTPDSDESDEGE.

S-adenosyl-L-methionine contacts are provided by G48, W50, D68, D86, and D111. Catalysis depends on K151, which acts as the Proton acceptor. The TRAM domain occupies P198–D256.

Belongs to the class I-like SAM-binding methyltransferase superfamily. RNA methyltransferase RlmE family.

It localises to the cytoplasm. The catalysed reaction is uridine(2552) in 23S rRNA + S-adenosyl-L-methionine = 2'-O-methyluridine(2552) in 23S rRNA + S-adenosyl-L-homocysteine + H(+). Specifically methylates the uridine in position 2552 of 23S rRNA at the 2'-O position of the ribose in the fully assembled 50S ribosomal subunit. The chain is Ribosomal RNA large subunit methyltransferase E from Halorubrum lacusprofundi (strain ATCC 49239 / DSM 5036 / JCM 8891 / ACAM 34).